The sequence spans 335 residues: Phospho-N-acetylmuramoyl-pentapeptide-transferase (335 aa).

10 consecutive transmembrane segments (helical) span residues 3-23 (LTLI…PHFI), 53-73 (GGTV…ILFF), 78-98 (SMGL…IGFL), 118-138 (LSLQ…PSGI), 143-163 (VFGF…FWVV), 175-195 (IDGL…VIAI), 200-220 (YDVL…FIFN), 226-246 (VFMG…ISIA), 251-271 (WTLL…MLQV), and 314-334 (VDAF…AILY).

The protein belongs to the glycosyltransferase 4 family. MraY subfamily. Mg(2+) is required as a cofactor.

The protein localises to the cell membrane. The enzyme catalyses UDP-N-acetyl-alpha-D-muramoyl-L-alanyl-gamma-D-glutamyl-L-lysyl-D-alanyl-D-alanine + di-trans,octa-cis-undecaprenyl phosphate = Mur2Ac(oyl-L-Ala-gamma-D-Glu-L-Lys-D-Ala-D-Ala)-di-trans,octa-cis-undecaprenyl diphosphate + UMP. It participates in cell wall biogenesis; peptidoglycan biosynthesis. Catalyzes the initial step of the lipid cycle reactions in the biosynthesis of the cell wall peptidoglycan: transfers peptidoglycan precursor phospho-MurNAc-pentapeptide from UDP-MurNAc-pentapeptide onto the lipid carrier undecaprenyl phosphate, yielding undecaprenyl-pyrophosphoryl-MurNAc-pentapeptide, known as lipid I. The chain is Phospho-N-acetylmuramoyl-pentapeptide-transferase from Streptococcus uberis (strain ATCC BAA-854 / 0140J).